The following is a 482-amino-acid chain: Adenylyltransferase and sulfurtransferase uba4 (482 aa).

The interval 33–57 (EGAALRAQSQKTASANATTGQRTKS) is disordered. The span at 39 to 54 (AQSQKTASANATTGQR) shows a compositional bias: polar residues. ATP-binding positions include glycine 98, aspartate 119, 126 to 130 (SNLHR), lysine 143, and 187 to 188 (DN). 2 residues coordinate Zn(2+): cysteine 236 and cysteine 239. The active-site Glycyl thioester intermediate; for adenylyltransferase activity is the cysteine 253. Zn(2+) contacts are provided by cysteine 315 and cysteine 318. The Rhodanese domain maps to 366 to 480 (AGAQRHIIDV…WREQVDPDWP (115 aa)). Cysteine 435 (cysteine persulfide intermediate; for sulfurtransferase activity) is an active-site residue.

In the N-terminal section; belongs to the HesA/MoeB/ThiF family. UBA4 subfamily. Zn(2+) is required as a cofactor.

The protein localises to the cytoplasm. It is found in the cytosol. The catalysed reaction is [molybdopterin-synthase sulfur-carrier protein]-C-terminal Gly-Gly + ATP + H(+) = [molybdopterin-synthase sulfur-carrier protein]-C-terminal Gly-Gly-AMP + diphosphate. The enzyme catalyses [molybdopterin-synthase sulfur-carrier protein]-C-terminal Gly-Gly-AMP + S-sulfanyl-L-cysteinyl-[cysteine desulfurase] + AH2 = [molybdopterin-synthase sulfur-carrier protein]-C-terminal-Gly-aminoethanethioate + L-cysteinyl-[cysteine desulfurase] + A + AMP + 2 H(+). It functions in the pathway tRNA modification; 5-methoxycarbonylmethyl-2-thiouridine-tRNA biosynthesis. It participates in cofactor biosynthesis; molybdopterin biosynthesis. Its function is as follows. Plays a central role in 2-thiolation of mcm(5)S(2)U at tRNA wobble positions of cytosolic tRNA(Lys), tRNA(Glu) and tRNA(Gln). Also essential during biosynthesis of the molybdenum cofactor. Acts by mediating the C-terminal thiocarboxylation of sulfur carriers urm1 and mocs2a. Its N-terminus first activates urm1 and mocs2a as acyl-adenylates (-COAMP), then the persulfide sulfur on the catalytic cysteine is transferred to urm1 and mocs2a to form thiocarboxylation (-COSH) of their C-terminus. The reaction probably involves hydrogen sulfide that is generated from the persulfide intermediate and that acts as a nucleophile towards urm1 and mocs2a. Subsequently, a transient disulfide bond is formed. Does not use thiosulfate as sulfur donor; nfs1 probably acting as a sulfur donor for thiocarboxylation reactions. This chain is Adenylyltransferase and sulfurtransferase uba4, found in Emericella nidulans (strain FGSC A4 / ATCC 38163 / CBS 112.46 / NRRL 194 / M139) (Aspergillus nidulans).